The following is a 288-amino-acid chain: ATP synthase gamma chain (288 aa).

This sequence belongs to the ATPase gamma chain family. F-type ATPases have 2 components, CF(1) - the catalytic core - and CF(0) - the membrane proton channel. CF(1) has five subunits: alpha(3), beta(3), gamma(1), delta(1), epsilon(1). CF(0) has three main subunits: a, b and c.

It localises to the cell inner membrane. Its function is as follows. Produces ATP from ADP in the presence of a proton gradient across the membrane. The gamma chain is believed to be important in regulating ATPase activity and the flow of protons through the CF(0) complex. This is ATP synthase gamma chain from Rickettsia bellii (strain RML369-C).